Reading from the N-terminus, the 696-residue chain is Equisetin cluster transcription factor eqxF (696 aa).

Disordered regions lie at residues 1-24 (MADQVQDVHPMEWGPGKTPQGRAR) and 73-117 (NQEQ…PADY).

Its subcellular location is the nucleus. In terms of biological role, transcription factor that regulates the expression of the gene cluster that mediates the biosynthesis of Equisetin. This Fusarium heterosporum protein is Equisetin cluster transcription factor eqxF.